The sequence spans 664 residues: Chaperone protein dnaK1 (664 aa).

Thr198 is modified (phosphothreonine; by autocatalysis).

This sequence belongs to the heat shock protein 70 family.

Acts as a chaperone. This Prochlorococcus marinus (strain MIT 9313) protein is Chaperone protein dnaK1 (dnaK1).